The sequence spans 373 residues: Glutamate 5-kinase (373 aa).

K15 serves as a coordination point for ATP. S55, D142, and N154 together coordinate substrate. ATP-binding positions include 174–175 (TD) and 216–222 (TGGMATK). A PUA domain is found at 281–359 (AGSIVVDAGA…SEIEGILGFR (79 aa)).

Belongs to the glutamate 5-kinase family.

It is found in the cytoplasm. The catalysed reaction is L-glutamate + ATP = L-glutamyl 5-phosphate + ADP. It participates in amino-acid biosynthesis; L-proline biosynthesis; L-glutamate 5-semialdehyde from L-glutamate: step 1/2. Catalyzes the transfer of a phosphate group to glutamate to form L-glutamate 5-phosphate. The protein is Glutamate 5-kinase of Citrifermentans bemidjiense (strain ATCC BAA-1014 / DSM 16622 / JCM 12645 / Bem) (Geobacter bemidjiensis).